The primary structure comprises 86 residues: UPF0297 protein SH1302 (86 aa).

This sequence belongs to the UPF0297 family.

This is UPF0297 protein SH1302 from Staphylococcus haemolyticus (strain JCSC1435).